A 369-amino-acid polypeptide reads, in one-letter code: Choline-phosphate cytidylyltransferase B (369 aa).

The tract at residues 1–27 (MPVLTTDAESETGIPKSLSNEPPSETM) is disordered. Isoleucine 84, phenylalanine 85, histidine 92, and lysine 122 together coordinate CTP. Phosphocholine contacts are provided by lysine 122 and tryptophan 151. Histidine 168, aspartate 169, tyrosine 173, glutamine 195, arginine 196, threonine 197, and isoleucine 200 together coordinate CTP. The interval 309–369 (RMLQALSPKQ…SMSEGDEDEK (61 aa)) is disordered. A phosphoserine mark is found at serine 315, serine 319, serine 322, serine 323, serine 329, serine 331, and serine 335. Over residues 319–339 (SPVSSPTRSRSPSRSPSPTFS) the composition is skewed to low complexity. Phosphothreonine is present on threonine 345. A phosphoserine mark is found at serine 346, serine 349, serine 350, serine 355, serine 360, and serine 362. Low complexity predominate over residues 351–362 (PKAASASISSMS).

This sequence belongs to the cytidylyltransferase family. Homodimer. As to expression, highly expressed in brain (at protein level). Expressed in liver (at protein level). Expressed at lower levels in lung and gonads. In terms of tissue distribution, expressed in brain (at protein level). Expressed at lower levels in lung and gonads.

It is found in the endoplasmic reticulum. The protein resides in the cytoplasm. The enzyme catalyses phosphocholine + CTP + H(+) = CDP-choline + diphosphate. The protein operates within phospholipid metabolism; phosphatidylcholine biosynthesis; phosphatidylcholine from phosphocholine: step 1/2. In terms of biological role, catalyzes the key rate-limiting step in the CDP-choline pathway for phosphatidylcholine biosynthesis. Plays an important role in ovary maturation and the maintenance of sperm production. Catalyzes the key rate-limiting step in the CDP-choline pathway for phosphatidylcholine biosynthesis. This chain is Choline-phosphate cytidylyltransferase B (Pcyt1b), found in Mus musculus (Mouse).